The primary structure comprises 172 residues: Peptide methionine sulfoxide reductase MsrA 2 (172 aa).

Residue cysteine 12 is part of the active site.

The protein belongs to the MsrA Met sulfoxide reductase family.

The enzyme catalyses L-methionyl-[protein] + [thioredoxin]-disulfide + H2O = L-methionyl-(S)-S-oxide-[protein] + [thioredoxin]-dithiol. The catalysed reaction is [thioredoxin]-disulfide + L-methionine + H2O = L-methionine (S)-S-oxide + [thioredoxin]-dithiol. Has an important function as a repair enzyme for proteins that have been inactivated by oxidation. Catalyzes the reversible oxidation-reduction of methionine sulfoxide in proteins to methionine. The sequence is that of Peptide methionine sulfoxide reductase MsrA 2 (msrA2) from Lactococcus lactis subsp. lactis (strain IL1403) (Streptococcus lactis).